The primary structure comprises 346 residues: Uroporphyrinogen decarboxylase (346 aa).

Substrate-binding positions include 26-30, Phe-45, Asp-76, Tyr-153, Ser-208, and His-323; that span reads RQAGR.

Belongs to the uroporphyrinogen decarboxylase family. Homodimer.

It localises to the cytoplasm. The enzyme catalyses uroporphyrinogen III + 4 H(+) = coproporphyrinogen III + 4 CO2. Its pathway is porphyrin-containing compound metabolism; protoporphyrin-IX biosynthesis; coproporphyrinogen-III from 5-aminolevulinate: step 4/4. Its function is as follows. Catalyzes the decarboxylation of four acetate groups of uroporphyrinogen-III to yield coproporphyrinogen-III. This is Uroporphyrinogen decarboxylase from Prochlorococcus marinus subsp. pastoris (strain CCMP1986 / NIES-2087 / MED4).